Consider the following 610-residue polypeptide: Isocitrate dehydrogenase kinase/phosphatase (610 aa).

ATP contacts are provided by residues 359–365 (APGFKGT) and lysine 380. Aspartate 419 is an active-site residue.

The protein belongs to the AceK family.

The protein localises to the cytoplasm. The catalysed reaction is L-seryl-[isocitrate dehydrogenase] + ATP = O-phospho-L-seryl-[isocitrate dehydrogenase] + ADP + H(+). Bifunctional enzyme which can phosphorylate or dephosphorylate isocitrate dehydrogenase (IDH) on a specific serine residue. This is a regulatory mechanism which enables bacteria to bypass the Krebs cycle via the glyoxylate shunt in response to the source of carbon. When bacteria are grown on glucose, IDH is fully active and unphosphorylated, but when grown on acetate or ethanol, the activity of IDH declines drastically concomitant with its phosphorylation. The polypeptide is Isocitrate dehydrogenase kinase/phosphatase (Rhodopseudomonas palustris (strain TIE-1)).